The chain runs to 466 residues: Delta-1 crystallin (466 aa).

The residue at position 2 (Ala-2) is a Blocked amino end (Ala).

The protein belongs to the lyase 1 family. Argininosuccinate lyase subfamily. Homotetramer. Post-translationally, the N-terminus is blocked. Eye lens.

Delta crystallin, the principal crystallin in embryonic lens, is found only in birds and reptiles. The chain is Delta-1 crystallin (ASL1) from Gallus gallus (Chicken).